A 311-amino-acid polypeptide reads, in one-letter code: tRNA dimethylallyltransferase (311 aa).

9–16 (GPTAVGKT) contacts ATP. A substrate-binding site is contributed by 11-16 (TAVGKT). The segment at 34 to 37 (DSMQ) is interaction with substrate tRNA.

The protein belongs to the IPP transferase family. In terms of assembly, monomer. It depends on Mg(2+) as a cofactor.

The catalysed reaction is adenosine(37) in tRNA + dimethylallyl diphosphate = N(6)-dimethylallyladenosine(37) in tRNA + diphosphate. Catalyzes the transfer of a dimethylallyl group onto the adenine at position 37 in tRNAs that read codons beginning with uridine, leading to the formation of N6-(dimethylallyl)adenosine (i(6)A). This Clostridium botulinum (strain Langeland / NCTC 10281 / Type F) protein is tRNA dimethylallyltransferase.